Here is a 595-residue protein sequence, read N- to C-terminus: MIELRHEVQGDLVTVNVVETPEDLEGFRNFIRAHLNCLAVDTETTGLDIYSDTFECRLVQFGTQDEAWVVPVELGDVFIEDVRIAIGALKRMVLQNASFDLQVLDQCFGIEMEGLWPRVLDTQILAKLVDPRPFEAGGFGHSLEELIAKFISEDQAENVKKLMAKLAAEHKTTKAKIWSTIDLFHPEYLLYAGMDTIFTARVCKSLTPLVPDVSRSLVPYEHKISEICSYIDRQGFLLDVEYSRSLAEKWLADQEVWEAIAFTEYGVEKVNSTEDLAEGLEEMGVKITGRTETGKRQVNAALLDKLVEDGNELAAIAQEAKKLGKWRKTWVQKFIDTRDSEDRCHTFINPLQARTSRMSITGIPAQTLPSSDWIVRRCFIAEPGDVMASVDYQAQELRVLAALSGDRNMIEAFENGADLHQMTADAAQVPRKVGKTANFQKVYGGGAKALAEAVGISIPVAKRVHEAFSATYPGVERLSKKLAMEAGRNGYIVNAMGRRLPVDSSRTYSALNYMIQSSSRDVTCRALIRLHEAGYTPYLRLPIHDEIVASLPASEAERAAAHIGHLMQEQMGPVLVGTDPEVGKRSWGSLYGADY.

One can recognise a 3'-5' exonuclease domain in the interval 1–212; that stretch reads MIELRHEVQG…CKSLTPLVPD (212 aa). The segment at 213–595 is polymerase; the sequence is VSRSLVPYEH…SWGSLYGADY (383 aa).

The protein belongs to the DNA polymerase type-A family.

It catalyses the reaction DNA(n) + a 2'-deoxyribonucleoside 5'-triphosphate = DNA(n+1) + diphosphate. In terms of biological role, replicates viral genomic DNA. This polymerase possesses two enzymatic activities: DNA synthesis (polymerase) and an exonucleolytic activity that degrades single-stranded DNA in the 3'-5' direction. This chain is DNA polymerase (44), found in Mycobacterium phage L5 (Mycobacteriophage L5).